A 559-amino-acid polypeptide reads, in one-letter code: Probable 2-ketoarginine decarboxylase AruI (559 aa).

Glu-76 contacts thiamine diphosphate.

This sequence belongs to the TPP enzyme family. Requires thiamine diphosphate as cofactor.

It carries out the reaction 5-guanidino-2-oxopentanoate + H(+) = 4-guanidinobutanal + CO2. It functions in the pathway amino-acid degradation; L-arginine degradation. Functionally, catalyzes the decarboxylation of 2-ketoarginine, leading to the formation of 4-guanidinobutyraldehyde. This chain is Probable 2-ketoarginine decarboxylase AruI (aruI), found in Pseudomonas aeruginosa (strain ATCC 15692 / DSM 22644 / CIP 104116 / JCM 14847 / LMG 12228 / 1C / PRS 101 / PAO1).